Reading from the N-terminus, the 364-residue chain is S-adenosylmethionine:tRNA ribosyltransferase-isomerase (364 aa).

This sequence belongs to the QueA family. In terms of assembly, monomer.

The protein localises to the cytoplasm. It carries out the reaction 7-aminomethyl-7-carbaguanosine(34) in tRNA + S-adenosyl-L-methionine = epoxyqueuosine(34) in tRNA + adenine + L-methionine + 2 H(+). The protein operates within tRNA modification; tRNA-queuosine biosynthesis. In terms of biological role, transfers and isomerizes the ribose moiety from AdoMet to the 7-aminomethyl group of 7-deazaguanine (preQ1-tRNA) to give epoxyqueuosine (oQ-tRNA). This Synechococcus sp. (strain CC9902) protein is S-adenosylmethionine:tRNA ribosyltransferase-isomerase.